The chain runs to 447 residues: Sporulation protein YpeB (447 aa).

It belongs to the YpeB family.

In terms of biological role, required for spore cortex hydrolysis during germination. Appears to be required for either expression, localization, activation or function of SleB. The sequence is that of Sporulation protein YpeB from Halalkalibacterium halodurans (strain ATCC BAA-125 / DSM 18197 / FERM 7344 / JCM 9153 / C-125) (Bacillus halodurans).